The chain runs to 211 residues: Putative ankyrin repeat protein R810 (211 aa).

ANK repeat units follow at residues 31 to 61, 72 to 101, 103 to 131, 133 to 162, and 163 to 191; these read TKFIKLYYLVKTHKSILKKIVKNGYFENLKY, NINDVLLLACKYGNLPIVKYLVSKGADICA, QNSPIKNATYYGHLDVVKYLVSNGAKFFG, YSSAIIIASSSGKLDIVKYFVPGKIYFCLE, and MEIALVCATENKHTNIVDYLNSMRSSYFD.

This Acanthamoeba polyphaga mimivirus (APMV) protein is Putative ankyrin repeat protein R810.